The primary structure comprises 569 residues: Dolichol kinase EVAN (569 aa).

Topologically, residues 1-22 (MKTTATSFVTGERVVVFVVVSR) are cytoplasmic. A helical membrane pass occupies residues 23–43 (ILLSLPLSLISHGFSLFLLSL). Topologically, residues 44-67 (SAFLVEIRVETSPFLLSHFSSRRG) are lumenal. A helical membrane pass occupies residues 68–88 (ASSGILLGAVTLPSVMISKLV). At 89–108 (QLSRAISIHEAEQDELAHVT) the chain is on the cytoplasmic side. Residues 109 to 129 (MQYWAASASCCAILIYLSVIM) traverse the membrane as a helical segment. The Lumenal segment spans residues 130–147 (SQVRKDESLSSSSIWLTR). Residues 148-168 (VSLTGTVLYGVACFVSLSMIS) form a helical membrane-spanning segment. The Cytoplasmic portion of the chain corresponds to 169–178 (HTGLNTSLKM). A helical membrane pass occupies residues 179–199 (LWMLFHGLAAVKLIRHLLCTF). Topologically, residues 200–207 (PSCASIGE) are lumenal. A helical membrane pass occupies residues 208 to 228 (ALLVTSGLVLYFGDFLACTIA). At 229–252 (KIFEKLIPVDLVSISYGIKRTETG) the chain is on the cytoplasmic side. A helical membrane pass occupies residues 253–273 (IIVQGLLLGLLLFPMVFRFVL). At 274–296 (HIYESSLRKRDARQRNCSDAAKS) the chain is on the lumenal side. Asparagine 289 carries N-linked (GlcNAc...) asparagine glycosylation. A helical transmembrane segment spans residues 297-317 (VLFFVSLLFFMVVAVPSWMQF). Topologically, residues 318–340 (VHDFNQHPFLWVLTFVFSEPLKR) are cytoplasmic. The helical transmembrane segment at 341–361 (LSLCIYWILLIVVSVSRFYNI) threads the bilayer. The Lumenal segment spans residues 362–369 (SRSSKVER). A helical transmembrane segment spans residues 370-390 (ILLRKYYHLMAVLMFLPALVL). Residues 391–393 (QPK) lie on the Cytoplasmic side of the membrane. The chain crosses the membrane as a helical span at residues 394 to 414 (FLDLAFGAALAVFVALEIIRI). Topologically, residues 415–440 (WRIQPLGEPLHQFMNAFTDHRDSEHL) are lumenal. A helical transmembrane segment spans residues 441–461 (IVSHFSLLLGCALPIWMSSGF). Over 462–464 (NDR) the chain is Cytoplasmic. The helical transmembrane segment at 465–485 (ALSPFAGILSLGIGDTMASMV) threads the bilayer. Over 486-508 (GHKYGVLRWSKTGKKTVEGTAAG) the chain is Lumenal. The CTP-binding stretch occupies residues 487-503 (HKYGVLRWSKTGKKTVE). The chain crosses the membrane as a helical span at residues 509–529 (ITSMMAVCFVLVPILASMGYI). The Cytoplasmic portion of the chain corresponds to 530-548 (LSQGWWSLLVAVTATGMLE). The chain crosses the membrane as a helical span at residues 549–569 (AYTAQLDNAFIPLVFYSLLCL).

Belongs to the polyprenol kinase family.

Its subcellular location is the endoplasmic reticulum membrane. It catalyses the reaction a di-trans,poly-cis-dolichol + CTP = a di-trans,poly-cis-dolichyl phosphate + CDP + H(+). Its function is as follows. Essential for pollen development. Involved in protein N-glycosylation in the endoplasmic reticulum (ER), especially in the female gametophyte. Mediates pollen tube (PT) reception in synergids through protein glycosylation. This chain is Dolichol kinase EVAN, found in Arabidopsis thaliana (Mouse-ear cress).